The following is a 155-amino-acid chain: MSRRGTAEEKTAKSDPIYRNRLVNMLVNRILKHGKKSLAYQILYRAVKKIQQKTETNPLSVLRQAIRGVTPDIVVKARRVGGSTHQVPIEIGSTQGKALAIRWLLVASRKRPGRNMAFKLSSELVDAAKGGGDAIRKKEETHKMAEANRAFAHFR.

Belongs to the universal ribosomal protein uS7 family. Part of the 30S ribosomal subunit.

It is found in the plastid. The protein localises to the chloroplast. Its function is as follows. One of the primary rRNA binding proteins, it binds directly to 16S rRNA where it nucleates assembly of the head domain of the 30S subunit. This Lactoris fernandeziana protein is Small ribosomal subunit protein uS7c (rps7).